A 217-amino-acid polypeptide reads, in one-letter code: Somatotropin (217 aa).

The first 26 residues, 1–26 (MMAAGPRTSLLLAFALLCLPWTQVVG), serve as a signal peptide directing secretion. A Zn(2+)-binding site is contributed by His-46. A disulfide bond links Cys-79 and Cys-190. Ser-132 is subject to Phosphoserine. Glu-199 lines the Zn(2+) pocket. Cys-207 and Cys-215 are joined by a disulfide.

This sequence belongs to the somatotropin/prolactin family.

Its subcellular location is the secreted. Plays an important role in growth control. Its major role in stimulating body growth is to stimulate the liver and other tissues to secrete IGF1. It stimulates both the differentiation and proliferation of myoblasts. It also stimulates amino acid uptake and protein synthesis in muscle and other tissues. This is Somatotropin (GH1) from Bos taurus (Bovine).